The primary structure comprises 410 residues: Histidine--tRNA ligase (410 aa).

It belongs to the class-II aminoacyl-tRNA synthetase family.

The protein localises to the cytoplasm. The catalysed reaction is tRNA(His) + L-histidine + ATP = L-histidyl-tRNA(His) + AMP + diphosphate + H(+). This chain is Histidine--tRNA ligase, found in Methanocorpusculum labreanum (strain ATCC 43576 / DSM 4855 / Z).